Here is a 300-residue protein sequence, read N- to C-terminus: Secreted mono- and diacylglycerol lipase LIP4 (300 aa).

The first 16 residues, 1–16 (MRFLAFLLCLVPLALC), serve as a signal peptide directing secretion. C54 and C293 form a disulfide bridge. The active-site Nucleophile is S167. The active site involves D224.

This sequence belongs to the AB hydrolase superfamily. Lipase family. Class 3 subfamily.

It is found in the secreted. The enzyme catalyses a monoacylglycerol + H2O = glycerol + a fatty acid + H(+). It carries out the reaction a diacylglycerol + H2O = a monoacylglycerol + a fatty acid + H(+). Its function is as follows. Secreted lipase involved in Dandruff and seborrheic dermatitis (D/SD) probably via lipase-mediated breakdown of sebaceous lipids and release of irritating free fatty acids. Shows activity against monoglyceride and diglyceride substrates. Due to an absence of fatty acid synthase genes in Malassezia species, secretory lipases are essential for the yeast to generate free fatty acids from degradation of sebum and assimilate them as lipid sources for growth. Plays an essential role at the pathogen-host interface during disease progression. The protein is Secreted mono- and diacylglycerol lipase LIP4 of Malassezia restricta (Seborrheic dermatitis infection agent).